The primary structure comprises 117 residues: Ig heavy chain V region RF (117 aa).

The N-terminal stretch at 1–19 (MNFGLRLIFLVLVLKGVLC) is a signal peptide. A framework-1 region spans residues 20–49 (DVKLVESGGGLVKLGGSLKLSCAASGFTFS). The cysteines at positions 41 and 115 are disulfide-linked. Residues 50–54 (SYYMS) are complementarity-determining-1. The tract at residues 55-68 (WVRQTPEKRLELVA) is framework-2. The tract at residues 69–85 (AINSNGGSTYYPDTVKG) is complementarity-determining-2. Residues 86–117 (RFTISRDNAKNTLYLQMSSLKSEDTALYYCAR) form a framework-3 region.

This is Ig heavy chain V region RF from Mus musculus (Mouse).